Reading from the N-terminus, the 168-residue chain is Cyanate hydratase (168 aa).

Active-site residues include Arg91, Glu94, and Ser117.

Belongs to the cyanase family.

The enzyme catalyses cyanate + hydrogencarbonate + 3 H(+) = NH4(+) + 2 CO2. Catalyzes the reaction of cyanate with bicarbonate to produce ammonia and carbon dioxide. The chain is Cyanate hydratase from Arabidopsis thaliana (Mouse-ear cress).